The following is a 475-amino-acid chain: Ribulose bisphosphate carboxylase large chain (475 aa).

The propeptide occupies 1-2 (MS). Proline 3 carries the post-translational modification N-acetylproline. An N6,N6,N6-trimethyllysine modification is found at lysine 14. Substrate is bound by residues asparagine 123 and threonine 173. The active-site Proton acceptor is the lysine 175. Position 177 (lysine 177) interacts with substrate. Residues lysine 201, aspartate 203, and glutamate 204 each contribute to the Mg(2+) site. N6-carboxylysine is present on lysine 201. Catalysis depends on histidine 294, which acts as the Proton acceptor. Residues arginine 295, histidine 327, and serine 379 each contribute to the substrate site.

The protein belongs to the RuBisCO large chain family. Type I subfamily. Heterohexadecamer of 8 large chains and 8 small chains; disulfide-linked. The disulfide link is formed within the large subunit homodimers. It depends on Mg(2+) as a cofactor. In terms of processing, the disulfide bond which can form in the large chain dimeric partners within the hexadecamer appears to be associated with oxidative stress and protein turnover.

Its subcellular location is the plastid. It localises to the chloroplast. It carries out the reaction 2 (2R)-3-phosphoglycerate + 2 H(+) = D-ribulose 1,5-bisphosphate + CO2 + H2O. The enzyme catalyses D-ribulose 1,5-bisphosphate + O2 = 2-phosphoglycolate + (2R)-3-phosphoglycerate + 2 H(+). Functionally, ruBisCO catalyzes two reactions: the carboxylation of D-ribulose 1,5-bisphosphate, the primary event in carbon dioxide fixation, as well as the oxidative fragmentation of the pentose substrate in the photorespiration process. Both reactions occur simultaneously and in competition at the same active site. In Betula papyrifera (Paper birch), this protein is Ribulose bisphosphate carboxylase large chain.